Reading from the N-terminus, the 315-residue chain is Biotin synthase (315 aa).

One can recognise a Radical SAM core domain in the interval 39–266; it reads NSLQFATLLS…KSAIRLTAGR (228 aa). [4Fe-4S] cluster contacts are provided by Cys54, Cys58, and Cys61. Residues Cys98, Cys129, Cys189, and Arg261 each contribute to the [2Fe-2S] cluster site.

This sequence belongs to the radical SAM superfamily. Biotin synthase family. In terms of assembly, homodimer. It depends on [4Fe-4S] cluster as a cofactor. [2Fe-2S] cluster serves as cofactor.

The catalysed reaction is (4R,5S)-dethiobiotin + (sulfur carrier)-SH + 2 reduced [2Fe-2S]-[ferredoxin] + 2 S-adenosyl-L-methionine = (sulfur carrier)-H + biotin + 2 5'-deoxyadenosine + 2 L-methionine + 2 oxidized [2Fe-2S]-[ferredoxin]. It functions in the pathway cofactor biosynthesis; biotin biosynthesis; biotin from 7,8-diaminononanoate: step 2/2. In terms of biological role, catalyzes the conversion of dethiobiotin (DTB) to biotin by the insertion of a sulfur atom into dethiobiotin via a radical-based mechanism. The polypeptide is Biotin synthase (Legionella pneumophila (strain Corby)).